A 367-amino-acid chain; its full sequence is Leucine-rich repeat-containing protein 28 (367 aa).

9 LRR repeats span residues 16–36 (KHKNLFLNYRNLHHFPLELLK), 42–63 (YLERLYMKRNSLTSLPENLAQK), 66–87 (NLVELYLHSNNIVVVPEAIGSL), 89–110 (KLQCLDLSDNALEIVCPEIGRL), 112–133 (ALRHLRLANNQLQFLPPEVGDL), 135–156 (ELQTLDISTNRLLTLPERLHMC), 158–180 (SLQYLTVDRNRLWYVPRHLCQLP), 181–202 (SLNELSMAGNRLAFLPLDLGRS), and 204–226 (ELQYVYVDNNIHLKGLPSYLYNK).

This is Leucine-rich repeat-containing protein 28 (LRRC28) from Homo sapiens (Human).